Reading from the N-terminus, the 227-residue chain is Putative ankyrin repeat protein RF_0314 (227 aa).

ANK repeat units follow at residues 94-126 (NGCT…DPNI), 130-164 (DGNT…DIEL), and 168-199 (LGWT…DNDF).

The sequence is that of Putative ankyrin repeat protein RF_0314 from Rickettsia felis (strain ATCC VR-1525 / URRWXCal2) (Rickettsia azadi).